The chain runs to 437 residues: GTPase Der (437 aa).

EngA-type G domains lie at P4 to E167 and I176 to N351. Residues G10–S17, D57–I61, N119–D122, G182–S189, D229–M233, and N294–D297 contribute to the GTP site. In terms of domain architecture, KH-like spans L352–N436.

It belongs to the TRAFAC class TrmE-Era-EngA-EngB-Septin-like GTPase superfamily. EngA (Der) GTPase family. In terms of assembly, associates with the 50S ribosomal subunit.

Its function is as follows. GTPase that plays an essential role in the late steps of ribosome biogenesis. The sequence is that of GTPase Der from Halalkalibacterium halodurans (strain ATCC BAA-125 / DSM 18197 / FERM 7344 / JCM 9153 / C-125) (Bacillus halodurans).